The chain runs to 164 residues: Transcription elongation factor GreA (164 aa).

The stretch at 12 to 38 forms a coiled coil; it reads RRLERELERLKKERPGVILAIKEAREE.

It belongs to the GreA/GreB family.

In terms of biological role, necessary for efficient RNA polymerase transcription elongation past template-encoded arresting sites. The arresting sites in DNA have the property of trapping a certain fraction of elongating RNA polymerases that pass through, resulting in locked ternary complexes. Cleavage of the nascent transcript by cleavage factors such as GreA or GreB allows the resumption of elongation from the new 3'terminus. GreA releases sequences of 2 to 3 nucleotides. The chain is Transcription elongation factor GreA from Solidesulfovibrio magneticus (strain ATCC 700980 / DSM 13731 / RS-1) (Desulfovibrio magneticus).